The chain runs to 127 residues: Large ribosomal subunit protein bL17 (127 aa).

The protein belongs to the bacterial ribosomal protein bL17 family. In terms of assembly, part of the 50S ribosomal subunit. Contacts protein L32.

This is Large ribosomal subunit protein bL17 from Fervidobacterium nodosum (strain ATCC 35602 / DSM 5306 / Rt17-B1).